The primary structure comprises 282 residues: Dihydroorotate dehydrogenase B (NAD(+)), electron transfer subunit homolog (282 aa).

Residues 2 to 100 enclose the FAD-binding FR-type domain; the sequence is GGTALNEIVK…VGPLGNPSEI (99 aa). [2Fe-2S] cluster-binding residues include C225, C228, and C240.

It belongs to the PyrK family. [2Fe-2S] cluster is required as a cofactor. It depends on FAD as a cofactor.

This is Dihydroorotate dehydrogenase B (NAD(+)), electron transfer subunit homolog from Thermotoga maritima (strain ATCC 43589 / DSM 3109 / JCM 10099 / NBRC 100826 / MSB8).